The sequence spans 428 residues: tRNA(Ile2) 2-agmatinylcytidine synthetase TiaS (428 aa).

This sequence belongs to the TiaS family.

Its subcellular location is the cytoplasm. It carries out the reaction cytidine(34) in tRNA(Ile2) + agmatine + ATP + H2O = 2-agmatinylcytidine(34) in tRNA(Ile2) + AMP + 2 phosphate + 2 H(+). Its function is as follows. ATP-dependent agmatine transferase that catalyzes the formation of 2-agmatinylcytidine (agm2C) at the wobble position (C34) of tRNA(Ile2), converting the codon specificity from AUG to AUA. The sequence is that of tRNA(Ile2) 2-agmatinylcytidine synthetase TiaS from Methanosarcina mazei (strain ATCC BAA-159 / DSM 3647 / Goe1 / Go1 / JCM 11833 / OCM 88) (Methanosarcina frisia).